A 239-amino-acid chain; its full sequence is Phosducin-like protein 3 (239 aa).

A disordered region spans residues 16-37 (KKGILPPKETPVEEEEDEQLHL). Residues 28 to 201 (EEEEDEQLHL…LEWRLSESGA (174 aa)) enclose the Phosducin domain. Position 41 is a phosphoserine (Ser41). The segment at 89 to 239 (FGELKEISGQ…RDGEEDSDED (151 aa)) is thioredoxin fold. The segment covering 217–227 (QLMTSIRCSAN) has biased composition (polar residues). The interval 217-239 (QLMTSIRCSANTHRDGEEDSDED) is disordered.

The protein belongs to the phosducin family. Interacts (via thioredoxin fold region) with kdr/vegfr2 (via juxtamembrane domain). Expressed in endothelial cells.

The protein resides in the cytoplasm. Its subcellular location is the perinuclear region. It is found in the endoplasmic reticulum. Functionally, acts as a chaperone for the angiogenic VEGF receptor KDR/VEGFR2, increasing its abundance by inhibiting its ubiquitination and degradation. Inhibits the folding activity of the chaperonin-containing T-complex (CCT) which leads to inhibition of cytoskeletal actin folding. Acts as a chaperone during heat shock alongside HSP90 and HSP40/70 chaperone complexes. Modulates the activation of caspases during apoptosis. The sequence is that of Phosducin-like protein 3 from Danio rerio (Zebrafish).